A 254-amino-acid polypeptide reads, in one-letter code: Pimeloyl-[acyl-carrier protein] methyl ester esterase (254 aa).

Residues Trp-20, 80-81 (SL), and 141-145 (FLALQ) each bind substrate. The active-site Nucleophile is Ser-80. Catalysis depends on residues Asp-205 and His-233. His-233 serves as a coordination point for substrate.

This sequence belongs to the AB hydrolase superfamily. Carboxylesterase BioH family. In terms of assembly, monomer.

The protein resides in the cytoplasm. The catalysed reaction is 6-carboxyhexanoyl-[ACP] methyl ester + H2O = 6-carboxyhexanoyl-[ACP] + methanol + H(+). It functions in the pathway cofactor biosynthesis; biotin biosynthesis. Its function is as follows. The physiological role of BioH is to remove the methyl group introduced by BioC when the pimeloyl moiety is complete. It allows to synthesize pimeloyl-ACP via the fatty acid synthetic pathway through the hydrolysis of the ester bonds of pimeloyl-ACP esters. In Methylococcus capsulatus (strain ATCC 33009 / NCIMB 11132 / Bath), this protein is Pimeloyl-[acyl-carrier protein] methyl ester esterase.